A 148-amino-acid polypeptide reads, in one-letter code: uncharacterized protein (148 aa).

Residues 1 to 108 (MGRAGPRSTA…PSRLRGKRSL (108 aa)) are disordered. The segment covering 22–42 (RRPRPWQKPTSPRRLHRRRPR) has biased composition (basic residues). Residues 88-97 (DTSASNPSQR) are compositionally biased toward polar residues.

This is an uncharacterized protein from Homo sapiens (Human).